The chain runs to 327 residues: Replication factor C small subunit (327 aa).

47–54 (GPPGTGKT) lines the ATP pocket.

This sequence belongs to the activator 1 small subunits family. RfcS subfamily. As to quaternary structure, heteromultimer composed of small subunits (RfcS) and large subunits (RfcL).

In terms of biological role, part of the RFC clamp loader complex which loads the PCNA sliding clamp onto DNA. This Sulfurisphaera tokodaii (strain DSM 16993 / JCM 10545 / NBRC 100140 / 7) (Sulfolobus tokodaii) protein is Replication factor C small subunit.